We begin with the raw amino-acid sequence, 271 residues long: uncharacterized protein (271 aa).

Residues 233-261 (VEPDPNRFSEPVDQPTLVEEGKEARRTER) are disordered. Residues 251–261 (EEGKEARRTER) are compositionally biased toward basic and acidic residues.

Functionally, may be involved in swimming motility. This is an uncharacterized protein from Haloferax volcanii (strain ATCC 29605 / DSM 3757 / JCM 8879 / NBRC 14742 / NCIMB 2012 / VKM B-1768 / DS2) (Halobacterium volcanii).